The sequence spans 299 residues: MTYKLYIMTFQNAHFGSGTLDSSKLTFSADRIFSALVLESLKMGKLDAFLAEANQDKFTLTDAFPFQFGPFLPKPIGYPKHDQIDQSVDVKEVRRQAKLSKKLQFLALENVDDYLNGELFENEEHAVIDTVTKNQPHKDGNLYQVATTRFSNDTSLYVIANESDLLNELMSSLQYSGLGGKRSSGFGRFELDIQNIPLELSDRLTKNHSDKVMSLTTALPVDADLEEAMEDGHYLLTKSSGFAFSHATNENYRKQDLYKFASGSTFSKTFEGQIVDVRPLDFPHAVLNYAKPLFFKLEV.

It belongs to the CRISPR-associated Csm4 family. In terms of assembly, part of the Csm effector complex that includes at least Cas10(1), Csm2(3), Csm3(5), Csm4(1), Csm5(1) and mature crRNA. The Csm complex is elongated and slightly twisted with a maximal length of 215 Angstroms and a diameter of 75-80 Angstroms. It has been modeled to have a central protein filamant of Csm3 subunits along which the dsRNA helix of paired crRNA and target RNA binds. The filament is capped at one end by Cas10 and Csm4 and at the other end by Csm5; ssDNA is thought to bind to the N-terminal HD domain of Cas10. Csm with a precursor crRNA does not include Csm5, while Cas6, the enzyme probably involved in pre-crRNA processing, is found associated with a subset of the Csm complex.

CRISPR (clustered regularly interspaced short palindromic repeat) is an adaptive immune system that provides protection against mobile genetic elements (viruses, transposable elements and conjugative plasmids). CRISPR clusters contain spacers, sequences complementary to antecedent mobile elements, and target invading nucleic acids. CRISPR clusters are transcribed and processed into CRISPR RNA (crRNA). The type III-A Csm effector complex binds crRNA and acts as a crRNA-guided RNase, DNase and cyclic oligoadenylate synthase; binding of target RNA cognate to the crRNA is required for all activities. In a heterologous host this Csm effector complex restricts ssRNA phage MS2, suggesting it may target RNA viruses in vivo. In terms of biological role, csm functions as a non-specific ssDNase. Base-pairing between crRNA and target RNA to form a ternary Csm complex activates a ssDNase activity; target RNA cleavage suppresses the ssDNase, a temporal control that prevents uncontrolled DNA degradation. Viral RNA transcripts probably tether the Csm complex to the viral genome, recruiting Cas10 ssDNA activity which is able to degrade DNA in the transcription bubble, spatially controlling the DNase activity. Functionally, the subunit probably binds to the 5' handle of the crRNA, helping in discrimination between self- and non-self. In Streptococcus thermophilus, this protein is CRISPR system Cms protein Csm4.